We begin with the raw amino-acid sequence, 333 residues long: uncharacterized protein (333 aa).

In terms of domain architecture, Radical SAM core spans 67–274 (HFYPTTQVVS…LEMARNLAIE (208 aa)). [4Fe-4S] cluster-binding residues include Cys82, Cys86, and Cys89.

[4Fe-4S] cluster is required as a cofactor.

This is an uncharacterized protein from Methanocaldococcus jannaschii (strain ATCC 43067 / DSM 2661 / JAL-1 / JCM 10045 / NBRC 100440) (Methanococcus jannaschii).